The primary structure comprises 446 residues: Questin oxidase (446 aa).

This sequence belongs to the questin oxidase family.

The enzyme catalyses questin + NADPH + O2 = demethylsulochrin + NADP(+). It participates in secondary metabolite biosynthesis. Questin oxidase; part of the gene cluster that mediates the biosynthesis of geodin, an intermediate in the biosynthesis of other natural products. The pathway begins with the synthesis of atrochrysone thioester by the polyketide synthase (PKS) gedC. The atrochrysone carboxyl ACP thioesterase gedB then breaks the thioester bond and releases the atrochrysone carboxylic acid from gedC. The atrochrysone carboxylic acid is then converted to atrochrysone which is further transformed into emodinanthrone. The next step is performed by the emodinanthrone oxygenase gedH that catalyzes the oxidation of emodinanthrone to emodin. Emodin O-methyltransferase encoded probably by gedA then catalyzes methylation of the 8-hydroxy group of emodin to form questin. Ring cleavage of questin by questin oxidase gedK leads to desmethylsulochrin via several intermediates including questin epoxide. Another methylation step probably catalyzed by methyltransferase gedG leads to the formation of sulochrin which is further converted to dihydrogeodin by the sulochrin halogenase gedL. Finally, the dihydrogeodin oxidase gedJ catalyzes the stereospecific phenol oxidative coupling reaction converting dihydrogeodin to geodin. This chain is Questin oxidase, found in Aspergillus terreus (strain NIH 2624 / FGSC A1156).